Reading from the N-terminus, the 449-residue chain is Histone-lysine N-methyltransferase SET5 (449 aa).

One can recognise an SET domain in the interval 93–410 (PKVEVKMFAG…PGEELTISYV (318 aa)).

This sequence belongs to the class V-like SAM-binding methyltransferase superfamily. Histone-lysine methyltransferase family. SET5 subfamily.

It is found in the nucleus. It localises to the chromosome. Its subcellular location is the cytoplasm. The catalysed reaction is L-lysyl-[histone] + S-adenosyl-L-methionine = N(6)-methyl-L-lysyl-[histone] + S-adenosyl-L-homocysteine + H(+). Functionally, histone methyltransferase that monomethylates 'Lys-5', 'Lys-8' and 'Lys-12' of histone H4 (H4K5me1, H4K8me1 and H4K12me1, respectively), thereby controlling gene expression and remodeling chromatin structures. The chain is Histone-lysine N-methyltransferase SET5 (SET5) from Cryptococcus neoformans var. neoformans serotype D (strain B-3501A) (Filobasidiella neoformans).